A 189-amino-acid chain; its full sequence is Probable nicotinate-nucleotide adenylyltransferase (189 aa).

It belongs to the NadD family.

It carries out the reaction nicotinate beta-D-ribonucleotide + ATP + H(+) = deamido-NAD(+) + diphosphate. The protein operates within cofactor biosynthesis; NAD(+) biosynthesis; deamido-NAD(+) from nicotinate D-ribonucleotide: step 1/1. Functionally, catalyzes the reversible adenylation of nicotinate mononucleotide (NaMN) to nicotinic acid adenine dinucleotide (NaAD). This chain is Probable nicotinate-nucleotide adenylyltransferase, found in Bacillus mycoides (strain KBAB4) (Bacillus weihenstephanensis).